The following is a 311-amino-acid chain: 4-hydroxy-tetrahydrodipicolinate synthase (311 aa).

Thr-51 serves as a coordination point for pyruvate. Catalysis depends on Tyr-140, which acts as the Proton donor/acceptor. Lys-168 functions as the Schiff-base intermediate with substrate in the catalytic mechanism. Ile-209 lines the pyruvate pocket.

This sequence belongs to the DapA family. Homotetramer; dimer of dimers.

The protein localises to the cytoplasm. The enzyme catalyses L-aspartate 4-semialdehyde + pyruvate = (2S,4S)-4-hydroxy-2,3,4,5-tetrahydrodipicolinate + H2O + H(+). It participates in amino-acid biosynthesis; L-lysine biosynthesis via DAP pathway; (S)-tetrahydrodipicolinate from L-aspartate: step 3/4. Functionally, catalyzes the condensation of (S)-aspartate-beta-semialdehyde [(S)-ASA] and pyruvate to 4-hydroxy-tetrahydrodipicolinate (HTPA). The chain is 4-hydroxy-tetrahydrodipicolinate synthase from Streptococcus pneumoniae (strain CGSP14).